We begin with the raw amino-acid sequence, 368 residues long: Peptide chain release factor 2 (368 aa).

Gln-250 carries the N5-methylglutamine modification.

This sequence belongs to the prokaryotic/mitochondrial release factor family. Methylated by PrmC. Methylation increases the termination efficiency of RF2.

It is found in the cytoplasm. Functionally, peptide chain release factor 2 directs the termination of translation in response to the peptide chain termination codons UGA and UAA. This Chlamydia trachomatis serovar L2b (strain UCH-1/proctitis) protein is Peptide chain release factor 2.